Here is a 361-residue protein sequence, read N- to C-terminus: Protein RecA (361 aa).

Gly-68–Thr-75 is an ATP binding site. The segment at Pro-342–Glu-361 is disordered. The segment covering Gly-344–Glu-361 has biased composition (basic and acidic residues).

It belongs to the RecA family.

The protein resides in the cytoplasm. In terms of biological role, can catalyze the hydrolysis of ATP in the presence of single-stranded DNA, the ATP-dependent uptake of single-stranded DNA by duplex DNA, and the ATP-dependent hybridization of homologous single-stranded DNAs. It interacts with LexA causing its activation and leading to its autocatalytic cleavage. The sequence is that of Protein RecA from Clostridium beijerinckii (strain ATCC 51743 / NCIMB 8052) (Clostridium acetobutylicum).